The sequence spans 116 residues: Large ribosomal subunit protein bL20 (116 aa).

Belongs to the bacterial ribosomal protein bL20 family.

Its function is as follows. Binds directly to 23S ribosomal RNA and is necessary for the in vitro assembly process of the 50S ribosomal subunit. It is not involved in the protein synthesizing functions of that subunit. This Helicobacter pylori (strain P12) protein is Large ribosomal subunit protein bL20.